Consider the following 374-residue polypeptide: o-succinylbenzoate synthase (374 aa).

Lys164 (proton donor) is an active-site residue. Mg(2+) is bound by residues Asp189, Glu214, and Asp239. The active-site Proton acceptor is the Lys263.

Belongs to the mandelate racemase/muconate lactonizing enzyme family. MenC type 2 subfamily. As to quaternary structure, homodimer. A divalent metal cation serves as cofactor.

The catalysed reaction is (1R,6R)-6-hydroxy-2-succinyl-cyclohexa-2,4-diene-1-carboxylate = 2-succinylbenzoate + H2O. It functions in the pathway quinol/quinone metabolism; 1,4-dihydroxy-2-naphthoate biosynthesis; 1,4-dihydroxy-2-naphthoate from chorismate: step 4/7. The protein operates within quinol/quinone metabolism; menaquinone biosynthesis. In terms of biological role, converts 2-succinyl-6-hydroxy-2,4-cyclohexadiene-1-carboxylate (SHCHC) to 2-succinylbenzoate (OSB). Also acts as a N-succinylamino acid racemase (NSAR) that catalyzes the racemization of N-succinyl-L-phenylglycine. L.innocua has the menaquinone synthesis pathway, indicating that the species requires OSBS activity. However, the NSAR/OSBS is not encoded in the menaquinone operon, raising the possibility that both NSAR and OSBS are biological functions. The chain is o-succinylbenzoate synthase from Listeria innocua serovar 6a (strain ATCC BAA-680 / CLIP 11262).